A 347-amino-acid chain; its full sequence is D-fructose 1,6-bisphosphatase class 2/sedoheptulose 1,7-bisphosphatase (347 aa).

Mn(2+) is bound by residues Asp-33, Glu-57, Asp-97, and Glu-100. Substrate-binding positions include Glu-100–Thr-102, Tyr-131, Arg-176–Arg-178, and Asp-198–Asp-200. Residue Glu-225 coordinates Mn(2+).

This sequence belongs to the FBPase class 2 family. Homotetramer. The cofactor is Mn(2+).

The catalysed reaction is beta-D-fructose 1,6-bisphosphate + H2O = beta-D-fructose 6-phosphate + phosphate. The enzyme catalyses D-sedoheptulose 1,7-bisphosphate + H2O = D-sedoheptulose 7-phosphate + phosphate. It participates in carbohydrate biosynthesis; Calvin cycle. Functionally, catalyzes the hydrolysis of fructose 1,6-bisphosphate (Fru 1,6-P2) and sedoheptulose 1,7-bisphosphate (Sed 1,7-P2) to fructose 6-phosphate and sedoheptulose 7-phosphate, respectively. This is D-fructose 1,6-bisphosphatase class 2/sedoheptulose 1,7-bisphosphatase from Synechococcus sp. (strain JA-3-3Ab) (Cyanobacteria bacterium Yellowstone A-Prime).